We begin with the raw amino-acid sequence, 346 residues long: Large ribosomal subunit protein uL10 (346 aa).

The interval 307-346 (AAAVAKEPEKKEEVKEEEEEEEEEDHSEEDGMAGLGSLFG) is disordered. The segment covering 321–337 (KEEEEEEEEEDHSEEDG) has biased composition (acidic residues).

It belongs to the universal ribosomal protein uL10 family. Part of the 50S ribosomal subunit. Forms part of the ribosomal stalk which helps the ribosome interact with GTP-bound translation factors. Forms both a pentameric L10(L12)2(L12)2 and heptameric L10(L12)2(L12)2(L12)2 complex, where L10 forms an elongated spine to which the L12 dimers bind in a sequential fashion. The proportion of heptameric complexes increases during cell growth.

Functionally, forms part of the ribosomal stalk, playing a central role in the interaction of the ribosome with GTP-bound translation factors. The sequence is that of Large ribosomal subunit protein uL10 from Methanosarcina barkeri (strain Fusaro / DSM 804).